Reading from the N-terminus, the 254-residue chain is MFNILSRVCRSSSFHGFLRSSGYPRFGASFRGISMLNDLNNSANYQSKKRVGRGPASGLGKTSGRGHKGSGQRRGRRIKPGFEGGQTPITKLFPKVGHSTGHLKKPLRLGLGRVQEWIDRGRLDASKTITMKDLLDSRCCRGIKHGVELTADEPGLLKTAISIEVSKATVQAIQQIKNAGGSITTVYFSPLALRAHLHPSSFRTPPRPPLPVSKKDIRYYTNPHFAGYLANVKNIRELYYGDQRFPYEPIVKDK.

Residues 1-78 (MFNILSRVCR…GSGQRRGRRI (78 aa)) constitute a mitochondrion transit peptide. A disordered region spans residues 44–104 (NYQSKKRVGR…KVGHSTGHLK (61 aa)). Residues 64–79 (GRGHKGSGQRRGRRIK) are compositionally biased toward basic residues.

It belongs to the universal ribosomal protein uL15 family. As to quaternary structure, component of the mitochondrial large ribosomal subunit (mt-LSU). Mature yeast 74S mitochondrial ribosomes consist of a small (37S) and a large (54S) subunit. The 37S small subunit contains a 15S ribosomal RNA (15S mt-rRNA) and at least 32 different proteins. The 54S large subunit contains a 21S rRNA (21S mt-rRNA) and at least 45 different proteins.

The protein resides in the mitochondrion. Component of the mitochondrial ribosome (mitoribosome), a dedicated translation machinery responsible for the synthesis of mitochondrial genome-encoded proteins, including at least some of the essential transmembrane subunits of the mitochondrial respiratory chain. The mitoribosomes are attached to the mitochondrial inner membrane and translation products are cotranslationally integrated into the membrane. The polypeptide is Large ribosomal subunit protein uL15m (mrpl10) (Schizosaccharomyces pombe (strain 972 / ATCC 24843) (Fission yeast)).